The chain runs to 711 residues: Denticleless protein homolog B (711 aa).

WD repeat units lie at residues 47–89 (GRAV…MQRL), 96–135 (AHTN…LIGE), and 138–178 (GHQC…KDGF). The DDB1-binding motif signature appears at 168–171 (WDTR). The Nuclear localization signal signature appears at 197–204 (PSKVKKRK). WD repeat units follow at residues 215–254 (DSQQ…STYR), 270–309 (TRKL…TDPV), 314–355 (GHQN…AAPI), and 359–398 (GHCQ…SEDS). Residues 244–247 (WDLR) carry the DDB1-binding motif motif. Disordered regions lie at residues 473 to 524 (QTPK…AFTP) and 601 to 698 (EFDQ…TPGS). Polar residues-rich tracts occupy residues 504–516 (TPKS…SKTP) and 606–627 (LSPS…TLSP). Residues 631-642 (MKSDFVDKENSS) show a composition bias toward basic and acidic residues. Low complexity predominate over residues 658–675 (DNSSPQFKSSSSPSSRNS). A compositionally biased stretch (polar residues) spans 684-697 (NAPNSPVSVPTTPG).

This sequence belongs to the WD repeat cdt2 family. As to quaternary structure, component of the DCX(DTL) E3 ubiquitin ligase complex, at least composed of cul4 (cul4a or cul4b), ddb1, dtl/cdt2 and rbx1.

It localises to the nucleus. The protein localises to the cytoplasm. The protein resides in the cytoskeleton. It is found in the microtubule organizing center. Its subcellular location is the centrosome. It localises to the chromosome. It functions in the pathway protein modification; protein ubiquitination. Functionally, substrate-specific adapter of a DCX (DDB1-CUL4-X-box) E3 ubiquitin-protein ligase complex required for cell cycle control, DNA damage response and translesion DNA synthesis. The DCX(DTL) complex, also named CRL4(CDT2) complex, mediates the polyubiquitination and subsequent degradation of CDT1, CDKN1A/p21(CIP1), KMT5A and SDE2. CDT1 degradation in response to DNA damage is necessary to ensure proper cell cycle regulation of DNA replication. CDKN1A/p21(CIP1) degradation during S phase or following UV irradiation is essential to control replication licensing. KMT5A degradation is also important for a proper regulation of mechanisms such as TGF-beta signaling, cell cycle progression, DNA repair and cell migration. Most substrates require their interaction with PCNA for their polyubiquitination: substrates interact with PCNA via their PIP-box, and those containing the 'K+4' motif in the PIP box, recruit the DCX(DTL) complex, leading to their degradation. In undamaged proliferating cells, the DCX(DTL) complex also promotes the 'Lys-164' monoubiquitination of PCNA, thereby being involved in PCNA-dependent translesion DNA synthesis. May play a role in the regulation of the circadian clock. This is Denticleless protein homolog B (dtl-b) from Xenopus laevis (African clawed frog).